The sequence spans 246 residues: 3-deoxy-manno-octulosonate cytidylyltransferase (246 aa).

This sequence belongs to the KdsB family.

The protein resides in the cytoplasm. It carries out the reaction 3-deoxy-alpha-D-manno-oct-2-ulosonate + CTP = CMP-3-deoxy-beta-D-manno-octulosonate + diphosphate. The protein operates within nucleotide-sugar biosynthesis; CMP-3-deoxy-D-manno-octulosonate biosynthesis; CMP-3-deoxy-D-manno-octulosonate from 3-deoxy-D-manno-octulosonate and CTP: step 1/1. It functions in the pathway bacterial outer membrane biogenesis; lipopolysaccharide biosynthesis. Its function is as follows. Activates KDO (a required 8-carbon sugar) for incorporation into bacterial lipopolysaccharide in Gram-negative bacteria. The polypeptide is 3-deoxy-manno-octulosonate cytidylyltransferase (Rickettsia massiliae (strain Mtu5)).